The sequence spans 208 residues: NAD-dependent protein deacylase (208 aa).

A Deacetylase sirtuin-type domain is found at 1-208 (MKPICVVLSG…NTGFNPVTGW (208 aa)). Position 10–29 (10–29 (GAGISAESGIPTYRAEDGLW)) interacts with NAD(+). Residues Tyr-54 and Arg-57 each coordinate substrate. 87–90 (QNVE) is an NAD(+) binding site. The Proton acceptor role is filled by His-105. Residues 170–172 (GTS) and 197–199 (NPN) each bind NAD(+).

This sequence belongs to the sirtuin family. Class III subfamily.

The protein resides in the cytoplasm. The catalysed reaction is N(6)-acetyl-L-lysyl-[protein] + NAD(+) + H2O = 2''-O-acetyl-ADP-D-ribose + nicotinamide + L-lysyl-[protein]. It carries out the reaction N(6)-succinyl-L-lysyl-[protein] + NAD(+) + H2O = 2''-O-succinyl-ADP-D-ribose + nicotinamide + L-lysyl-[protein]. In terms of biological role, NAD-dependent lysine deacetylase and desuccinylase that specifically removes acetyl and succinyl groups on target proteins. Modulates the activities of several proteins which are inactive in their acylated form. The sequence is that of NAD-dependent protein deacylase from Aggregatibacter actinomycetemcomitans (Actinobacillus actinomycetemcomitans).